The sequence spans 97 residues: Co-chaperonin GroES (97 aa).

It belongs to the GroES chaperonin family. In terms of assembly, heptamer of 7 subunits arranged in a ring. Interacts with the chaperonin GroEL.

The protein localises to the cytoplasm. In terms of biological role, together with the chaperonin GroEL, plays an essential role in assisting protein folding. The GroEL-GroES system forms a nano-cage that allows encapsulation of the non-native substrate proteins and provides a physical environment optimized to promote and accelerate protein folding. GroES binds to the apical surface of the GroEL ring, thereby capping the opening of the GroEL channel. This Bifidobacterium longum (strain NCC 2705) protein is Co-chaperonin GroES.